A 208-amino-acid chain; its full sequence is MAKVSLFKQDGSQAGEVTLNDSVFGIEPNESVVFDVVISQRASLRQGTHAHKNRSAVSGGGKKPWRQKGTGRARQGSTRSPQWRGGGTVFGPNPRSYAYKLPQKVRQLALKSVYSTKVADGKLIAVDTLDFAAPKTAEFAKVISALSIERKVLVVLPNEGNEFAELSARNLENVKVTTANSASVLDIVSADKLLVVQSALTQIEEVLA.

The disordered stretch occupies residues 45-89; the sequence is RQGTHAHKNRSAVSGGGKKPWRQKGTGRARQGSTRSPQWRGGGTV.

It belongs to the universal ribosomal protein uL4 family. In terms of assembly, part of the 50S ribosomal subunit.

One of the primary rRNA binding proteins, this protein initially binds near the 5'-end of the 23S rRNA. It is important during the early stages of 50S assembly. It makes multiple contacts with different domains of the 23S rRNA in the assembled 50S subunit and ribosome. Its function is as follows. Forms part of the polypeptide exit tunnel. The chain is Large ribosomal subunit protein uL4 from Lactococcus lactis subsp. cremoris (strain SK11).